Consider the following 173-residue polypeptide: Large ribosomal subunit protein uL14mz (173 aa).

Residues 1 to 61 (MAAAFASRLT…TVLKVVDNSG (61 aa)) constitute a mitochondrion transit peptide.

This sequence belongs to the universal ribosomal protein uL14 family. In terms of assembly, part of the mitochondrial 50S ribosomal subunit. As to expression, mostly expressed in leaves and inflorescences, including floral organs and meristems, and, to a lower extent, in pistils.

It is found in the mitochondrion. Its function is as follows. Binds to 23S rRNA in mitochondrion. In Arabidopsis thaliana (Mouse-ear cress), this protein is Large ribosomal subunit protein uL14mz (HLP).